The following is a 275-amino-acid chain: UDP-Gal:alpha-D-GlcNAc-diphosphoundecaprenol beta-1,3-galactosyltransferase (275 aa).

This sequence belongs to the glycosyltransferase 2 family. The cofactor is Mn(2+).

It localises to the cell inner membrane. The catalysed reaction is N-acetyl-alpha-D-glucosaminyl-di-trans,octa-cis-undecaprenyl diphosphate + UDP-alpha-D-galactose = beta-D-Gal-(1-&gt;3)-alpha-D-GlcNAc-di-trans,octa-cis-undecaprenyl diphosphate + UDP + H(+). The protein operates within bacterial outer membrane biogenesis; LPS O-antigen biosynthesis. Functionally, catalyzes the addition of Gal, the second sugar moiety of the O7-antigen repeating unit, to GlcNAc-pyrophosphate-undecaprenol. The polypeptide is UDP-Gal:alpha-D-GlcNAc-diphosphoundecaprenol beta-1,3-galactosyltransferase (wbbD) (Escherichia coli).